A 421-amino-acid chain; its full sequence is UDP-N-acetylglucosamine 1-carboxyvinyltransferase (421 aa).

Phosphoenolpyruvate is bound at residue 22–23 (KN). Residue Arg-93 coordinates UDP-N-acetyl-alpha-D-glucosamine. Cys-117 serves as the catalytic Proton donor. Cys-117 carries the post-translational modification 2-(S-cysteinyl)pyruvic acid O-phosphothioketal. UDP-N-acetyl-alpha-D-glucosamine-binding positions include 122–126 (RPVDL), Asp-308, and Ile-330.

The protein belongs to the EPSP synthase family. MurA subfamily.

It is found in the cytoplasm. It carries out the reaction phosphoenolpyruvate + UDP-N-acetyl-alpha-D-glucosamine = UDP-N-acetyl-3-O-(1-carboxyvinyl)-alpha-D-glucosamine + phosphate. The protein operates within cell wall biogenesis; peptidoglycan biosynthesis. Cell wall formation. Adds enolpyruvyl to UDP-N-acetylglucosamine. The sequence is that of UDP-N-acetylglucosamine 1-carboxyvinyltransferase from Pseudomonas putida (strain GB-1).